The chain runs to 349 residues: Small ribosomal subunit protein uS2 (349 aa).

The protein belongs to the universal ribosomal protein uS2 family.

This chain is Small ribosomal subunit protein uS2, found in Methylobacterium nodulans (strain LMG 21967 / CNCM I-2342 / ORS 2060).